We begin with the raw amino-acid sequence, 492 residues long: UDP-N-acetylmuramoyl-L-alanyl-D-glutamate--2,6-diaminopimelate ligase (492 aa).

A UDP-N-acetyl-alpha-D-muramoyl-L-alanyl-D-glutamate-binding site is contributed by serine 30. 114–120 (GTNGKTS) is a binding site for ATP. Residues 156 to 157 (TT), serine 183, glutamine 189, and arginine 191 each bind UDP-N-acetyl-alpha-D-muramoyl-L-alanyl-D-glutamate. Lysine 223 is modified (N6-carboxylysine). Meso-2,6-diaminopimelate-binding positions include arginine 389, 413 to 416 (DNPR), glycine 462, and glutamate 466. A Meso-diaminopimelate recognition motif motif is present at residues 413-416 (DNPR).

The protein belongs to the MurCDEF family. MurE subfamily. Mg(2+) is required as a cofactor. Carboxylation is probably crucial for Mg(2+) binding and, consequently, for the gamma-phosphate positioning of ATP.

The protein resides in the cytoplasm. It carries out the reaction UDP-N-acetyl-alpha-D-muramoyl-L-alanyl-D-glutamate + meso-2,6-diaminopimelate + ATP = UDP-N-acetyl-alpha-D-muramoyl-L-alanyl-gamma-D-glutamyl-meso-2,6-diaminopimelate + ADP + phosphate + H(+). The protein operates within cell wall biogenesis; peptidoglycan biosynthesis. Its function is as follows. Catalyzes the addition of meso-diaminopimelic acid to the nucleotide precursor UDP-N-acetylmuramoyl-L-alanyl-D-glutamate (UMAG) in the biosynthesis of bacterial cell-wall peptidoglycan. The sequence is that of UDP-N-acetylmuramoyl-L-alanyl-D-glutamate--2,6-diaminopimelate ligase from Neisseria meningitidis serogroup A / serotype 4A (strain DSM 15465 / Z2491).